The chain runs to 216 residues: Acyl-homoserine-lactone synthase (216 aa).

Belongs to the autoinducer synthase family.

It carries out the reaction a fatty acyl-[ACP] + S-adenosyl-L-methionine = an N-acyl-L-homoserine lactone + S-methyl-5'-thioadenosine + holo-[ACP] + H(+). Its function is as follows. Required for the synthesis of OHHL (N-(3-oxohexanoyl)-L-homoserine lactone), an autoinducer molecule which binds to a yet uncharacterized transcriptional regulator. This chain is Acyl-homoserine-lactone synthase (eagI), found in Enterobacter agglomerans (Erwinia herbicola).